Reading from the N-terminus, the 310-residue chain is Methionyl-tRNA formyltransferase (310 aa).

109-112 (SLLP) provides a ligand contact to (6S)-5,6,7,8-tetrahydrofolate.

It belongs to the Fmt family.

It carries out the reaction L-methionyl-tRNA(fMet) + (6R)-10-formyltetrahydrofolate = N-formyl-L-methionyl-tRNA(fMet) + (6S)-5,6,7,8-tetrahydrofolate + H(+). Functionally, attaches a formyl group to the free amino group of methionyl-tRNA(fMet). The formyl group appears to play a dual role in the initiator identity of N-formylmethionyl-tRNA by promoting its recognition by IF2 and preventing the misappropriation of this tRNA by the elongation apparatus. In Staphylococcus epidermidis (strain ATCC 12228 / FDA PCI 1200), this protein is Methionyl-tRNA formyltransferase.